The chain runs to 147 residues: UPF0306 protein YE0465 (147 aa).

It belongs to the UPF0306 family.

This is UPF0306 protein YE0465 from Yersinia enterocolitica serotype O:8 / biotype 1B (strain NCTC 13174 / 8081).